The chain runs to 394 residues: MPDKFKRVHVIVMDSVGIGEAPDAAKFGDFDVDTFGHIAKHVGGLKMPEMGKLGLSNIREIEGIEKAEKPLAYYTKMQEASNGKDTMTGHWEIMGLYIDTPFRVFPDGFPDDLINQIEAKTGRKVIGNKPASGTEIMAELGEEHVKTGALIVYTSADSVLQIAAHEDVVPLEELYEICEFCREITLDDPYMLGRIIARPFVGEPGAFVRTPNRHDYALKPFKPTVMDALKDGGKDVIAIGKISDIFDGEGVTESIRTKSNMDGMDQFIDVLDKDFNGMSFLNLVDFDALFGHRRDPQGYADALVDFDGRLVEVMEKLTDDDLLIITADHGNDPTYTGTDHTREFVPLLVYSPRFKNGGSELELRQTFADLGATVADNFDVKMPEYGKSFLKDLK.

The Mn(2+) site is built by aspartate 14, aspartate 287, histidine 292, aspartate 328, histidine 329, and histidine 340.

This sequence belongs to the phosphopentomutase family. The cofactor is Mn(2+).

It is found in the cytoplasm. The catalysed reaction is 2-deoxy-alpha-D-ribose 1-phosphate = 2-deoxy-D-ribose 5-phosphate. It catalyses the reaction alpha-D-ribose 1-phosphate = D-ribose 5-phosphate. The protein operates within carbohydrate degradation; 2-deoxy-D-ribose 1-phosphate degradation; D-glyceraldehyde 3-phosphate and acetaldehyde from 2-deoxy-alpha-D-ribose 1-phosphate: step 1/2. Functionally, isomerase that catalyzes the conversion of deoxy-ribose 1-phosphate (dRib-1-P) and ribose 1-phosphate (Rib-1-P) to deoxy-ribose 5-phosphate (dRib-5-P) and ribose 5-phosphate (Rib-5-P), respectively. This chain is Phosphopentomutase, found in Listeria innocua serovar 6a (strain ATCC BAA-680 / CLIP 11262).